Here is a 353-residue protein sequence, read N- to C-terminus: Protein RecA (353 aa).

67-74 (GPESSGKT) contributes to the ATP binding site. Positions 330–353 (SNPNSTPDFSVDDSEGVAETNEDF) are disordered. Residues 339–353 (SVDDSEGVAETNEDF) show a composition bias toward acidic residues.

Belongs to the RecA family.

It is found in the cytoplasm. Its function is as follows. Can catalyze the hydrolysis of ATP in the presence of single-stranded DNA, the ATP-dependent uptake of single-stranded DNA by duplex DNA, and the ATP-dependent hybridization of homologous single-stranded DNAs. It interacts with LexA causing its activation and leading to its autocatalytic cleavage. This chain is Protein RecA, found in Shigella sonnei.